Reading from the N-terminus, the 265-residue chain is Type II pantothenate kinase (265 aa).

ATP is bound at residue 6–13 (DAGGTLIK). Glu-70 functions as the Proton acceptor in the catalytic mechanism. Residues Thr-99, 121–125 (GGMIQ), Tyr-137, and Ser-225 contribute to the ATP site.

This sequence belongs to the type II pantothenate kinase family. In terms of assembly, homodimer.

The protein resides in the cytoplasm. The enzyme catalyses (R)-pantothenate + ATP = (R)-4'-phosphopantothenate + ADP + H(+). Its pathway is cofactor biosynthesis; coenzyme A biosynthesis; CoA from (R)-pantothenate: step 1/5. Its function is as follows. Catalyzes the phosphorylation of pantothenate (Pan), the first step in CoA biosynthesis. The protein is Type II pantothenate kinase of Staphylococcus epidermidis (strain ATCC 12228 / FDA PCI 1200).